A 229-amino-acid chain; its full sequence is NAD-dependent protein deacylase (229 aa).

Positions 1–227 constitute a Deacetylase sirtuin-type domain; sequence MKNLVILSGA…QDLMPKLIEM (227 aa). Position 9–28 (9–28) interacts with NAD(+); sequence GAGISAESGIKTFRDADGLW. Substrate-binding residues include tyrosine 53 and arginine 56. 86 to 89 is an NAD(+) binding site; that stretch reads QNVD. The active-site Proton acceptor is histidine 104. 169 to 171 is a binding site for NAD(+); it reads GTS.

It belongs to the sirtuin family. Class III subfamily.

It is found in the cytoplasm. It carries out the reaction N(6)-acetyl-L-lysyl-[protein] + NAD(+) + H2O = 2''-O-acetyl-ADP-D-ribose + nicotinamide + L-lysyl-[protein]. The enzyme catalyses N(6)-succinyl-L-lysyl-[protein] + NAD(+) + H2O = 2''-O-succinyl-ADP-D-ribose + nicotinamide + L-lysyl-[protein]. NAD-dependent lysine deacetylase and desuccinylase that specifically removes acetyl and succinyl groups on target proteins. Modulates the activities of several proteins which are inactive in their acylated form. In Helicobacter pylori (strain ATCC 700392 / 26695) (Campylobacter pylori), this protein is NAD-dependent protein deacylase.